Here is a 647-residue protein sequence, read N- to C-terminus: Acetyl-coenzyme A synthetase (647 aa).

CoA-binding positions include 190-193 (RGGK), T310, and N334. ATP contacts are provided by residues 386 to 388 (GEP), 410 to 415 (DTWWQT), D499, and R514. S522 contacts CoA. Residue R525 coordinates ATP. Positions 536, 538, and 541 each coordinate Mg(2+). R583 contributes to the CoA binding site. K608 is subject to N6-acetyllysine.

Belongs to the ATP-dependent AMP-binding enzyme family. Requires Mg(2+) as cofactor. Acetylated. Deacetylation by the SIR2-homolog deacetylase activates the enzyme.

It catalyses the reaction acetate + ATP + CoA = acetyl-CoA + AMP + diphosphate. Catalyzes the conversion of acetate into acetyl-CoA (AcCoA), an essential intermediate at the junction of anabolic and catabolic pathways. AcsA undergoes a two-step reaction. In the first half reaction, AcsA combines acetate with ATP to form acetyl-adenylate (AcAMP) intermediate. In the second half reaction, it can then transfer the acetyl group from AcAMP to the sulfhydryl group of CoA, forming the product AcCoA. The sequence is that of Acetyl-coenzyme A synthetase from Xanthomonas campestris pv. campestris (strain 8004).